The primary structure comprises 667 residues: MTFEQAKKRSLVLKEQLEKWNYEYYVNDNPSVSDQEYDRALQELIAIEQQYSELITIDSPTQRVSGQISEKFNKYVHTSPMLSLGNAFNYDDLIHFDEQIKEFTALPEIEYTCELKIDGLSISLVYDNHVLVMGATRGDGLTGEDVTINIKQIKSIPLRIDQPTLIVRGEVYLSVEEFNKINEERVKNGEFKFANPRNAAAGTLRQLDSTIVAKRKLNAFLYYYVNALQDGIQSQYEALQRLEQLKFKINPEYRYCSNIAAVWAYIQEYEPKRNQLGYEIDGIVIKVNNLNLYNRIGYTAKNPKWAIAYKFPAEVVVTKLLNIFPSVGRTGRITYNAVLEPIRIVGTIVRAATLHNADFITERDIRIGDNVQVKKAGDIIPEVINYVAARRQKNAQKWQEATHCPECNSLLERVEGEVDQYCINSVCPKKITRGLEHYCSRNAMNIEGISEKIIERLFKLEYLKSFSDLYQLEQYRAEIIELENFGEKSFENMITSINNSKNNSLERLLFALGIRHVGQKTAKLLARQFKTIDNLAAMNIEQLSIINDIGPIVAASVVDYFAIPANQQELALLRQNGVKMEYFATNQHLAQKFENYRFVITGVLSKSREYFKELIESYGGQVSESVSAKTTYLLAGTDAGNKLVKAQKLNVKIINEEEFQQLLSKED.

NAD(+)-binding positions include 34–38, 83–84, and glutamate 114; these read DQEYD and SL. The N6-AMP-lysine intermediate role is filled by lysine 116. Residues arginine 137, glutamate 170, lysine 286, and lysine 310 each contribute to the NAD(+) site. Residues cysteine 404, cysteine 407, cysteine 422, and cysteine 427 each coordinate Zn(2+). The BRCT domain maps to 588 to 667; sequence HLAQKFENYR…EFQQLLSKED (80 aa).

The protein belongs to the NAD-dependent DNA ligase family. LigA subfamily. Requires Mg(2+) as cofactor. Mn(2+) is required as a cofactor.

It carries out the reaction NAD(+) + (deoxyribonucleotide)n-3'-hydroxyl + 5'-phospho-(deoxyribonucleotide)m = (deoxyribonucleotide)n+m + AMP + beta-nicotinamide D-nucleotide.. Functionally, DNA ligase that catalyzes the formation of phosphodiester linkages between 5'-phosphoryl and 3'-hydroxyl groups in double-stranded DNA using NAD as a coenzyme and as the energy source for the reaction. It is essential for DNA replication and repair of damaged DNA. The sequence is that of DNA ligase from Spiroplasma citri.